A 218-amino-acid polypeptide reads, in one-letter code: Thymidylate kinase (218 aa).

Position 15 to 22 (Gly-15 to Ser-22) interacts with ATP.

This sequence belongs to the thymidylate kinase family.

It catalyses the reaction dTMP + ATP = dTDP + ADP. It participates in pyrimidine metabolism; dTTP biosynthesis. In terms of biological role, catalyzes the conversion of dTMP to dTDP. The protein is Thymidylate kinase of Caenorhabditis elegans.